The primary structure comprises 423 residues: COP9 signalosome complex subunit 3 (423 aa).

A PCI domain is found at 197 to 365 (NFERALYFYE…GMVCFHDNPE (169 aa)). Residues 403–423 (FVQKSMGSQDDDSGSKPSSYS) form a disordered region.

Belongs to the CSN3 family. In terms of assembly, component of the CSN complex, probably composed of cops1, cops2, cops3, cops4, cops5, cops6, cops7, cops8 and cops9.

The protein resides in the cytoplasm. It is found in the nucleus. Its function is as follows. Component of the COP9 signalosome complex (CSN), a complex involved in various cellular and developmental processes. The CSN complex is an essential regulator of the ubiquitin (Ubl) conjugation pathway by mediating the deneddylation of the cullin subunits of E3 ligase complexes, leading to modify the Ubl ligase activity. In Xenopus tropicalis (Western clawed frog), this protein is COP9 signalosome complex subunit 3 (cops3).